The following is a 90-amino-acid chain: uncharacterized protein (90 aa).

A disordered region spans residues 25–90; the sequence is GEAAYNSPTN…PPIAPPPILD (66 aa). Composition is skewed to polar residues over residues 30–54 and 65–79; these read NSPT…TESV and NDQT…SNVN.

This is an uncharacterized protein from Bacillus subtilis (strain 168).